The chain runs to 301 residues: MMRIGLFLLTNLAVLVVAGIILSLFGVGSYHGAGGLNLGNLLVICFVFGMVGSLISLLMSKWMAKKTTGTEIIDPNAPRNQAEAWLLQTVAELSQRAGIQMPEVGIFPSYQSNAFATGWNKNDALVSVSTGLMERMNKDELRAVLAHEIGHVANGDMVTLALIQGVVNAFVMFFARVVGDFIDRNVFGRQDGEAPGMGYFAITIVLDIVFGILASAIVMWFSRHREYRADEAGARLAGKQAMISALLRLQAESEMPDQMPKEMKAFAIAEGKEQGFSLAALFQTHPSIEQRVAALQQLNCP.

2 helical membrane-spanning segments follow: residues 4 to 24 and 38 to 58; these read IGLFLLTNLAVLVVAGIILSL and LGNLLVICFVFGMVGSLISLL. A Zn(2+)-binding site is contributed by His147. The active site involves Glu148. Position 151 (His151) interacts with Zn(2+). A run of 2 helical transmembrane segments spans residues 155–175 and 200–220; these read GDMVTLALIQGVVNAFVMFFA and FAITIVLDIVFGILASAIVMW. Residue Glu226 coordinates Zn(2+).

It belongs to the peptidase M48B family. The cofactor is Zn(2+).

It localises to the cell inner membrane. The protein is Protease HtpX of Acinetobacter baylyi (strain ATCC 33305 / BD413 / ADP1).